Reading from the N-terminus, the 249-residue chain is DNA repair protein RecO (249 aa).

It belongs to the RecO family.

Its function is as follows. Involved in DNA repair and RecF pathway recombination. This chain is DNA repair protein RecO, found in Exiguobacterium sibiricum (strain DSM 17290 / CCUG 55495 / CIP 109462 / JCM 13490 / 255-15).